A 647-amino-acid chain; its full sequence is Threonine--tRNA ligase (647 aa).

Residues 1 to 63 (MADISIKFPD…ASDGSIEIVT (63 aa)) enclose the TGS domain. A catalytic region spans residues 242 to 540 (DHRVIGNQLD…LTEIYKGAFP (299 aa)). Positions 336, 387, and 517 each coordinate Zn(2+).

Belongs to the class-II aminoacyl-tRNA synthetase family. As to quaternary structure, homodimer. Requires Zn(2+) as cofactor.

The protein resides in the cytoplasm. It carries out the reaction tRNA(Thr) + L-threonine + ATP = L-threonyl-tRNA(Thr) + AMP + diphosphate + H(+). Its function is as follows. Catalyzes the attachment of threonine to tRNA(Thr) in a two-step reaction: L-threonine is first activated by ATP to form Thr-AMP and then transferred to the acceptor end of tRNA(Thr). Also edits incorrectly charged L-seryl-tRNA(Thr). The sequence is that of Threonine--tRNA ligase from Levilactobacillus brevis (strain ATCC 367 / BCRC 12310 / CIP 105137 / JCM 1170 / LMG 11437 / NCIMB 947 / NCTC 947) (Lactobacillus brevis).